The sequence spans 448 residues: tRNA modification GTPase MnmE (448 aa).

Positions 24, 81, and 120 each coordinate (6S)-5-formyl-5,6,7,8-tetrahydrofolate. Residues 216-373 form the TrmE-type G domain; that stretch reads GLNVVLVGAP…LKRTLLREAG (158 aa). Asn-226 contributes to the K(+) binding site. GTP contacts are provided by residues 226–231, 245–251, and 270–273; these read NVGKSS, TDIAGTT, and DTAG. Residue Ser-230 coordinates Mg(2+). K(+) contacts are provided by Thr-245, Ile-247, and Thr-250. Thr-251 contacts Mg(2+). Lys-448 contributes to the (6S)-5-formyl-5,6,7,8-tetrahydrofolate binding site.

It belongs to the TRAFAC class TrmE-Era-EngA-EngB-Septin-like GTPase superfamily. TrmE GTPase family. Homodimer. Heterotetramer of two MnmE and two MnmG subunits. The cofactor is K(+).

It is found in the cytoplasm. In terms of biological role, exhibits a very high intrinsic GTPase hydrolysis rate. Involved in the addition of a carboxymethylaminomethyl (cmnm) group at the wobble position (U34) of certain tRNAs, forming tRNA-cmnm(5)s(2)U34. The chain is tRNA modification GTPase MnmE from Neisseria meningitidis serogroup B (strain ATCC BAA-335 / MC58).